A 370-amino-acid polypeptide reads, in one-letter code: Putative glutamate--cysteine ligase 2 (370 aa).

It belongs to the glutamate--cysteine ligase type 2 family. YbdK subfamily.

It carries out the reaction L-cysteine + L-glutamate + ATP = gamma-L-glutamyl-L-cysteine + ADP + phosphate + H(+). Functionally, ATP-dependent carboxylate-amine ligase which exhibits weak glutamate--cysteine ligase activity. This chain is Putative glutamate--cysteine ligase 2, found in Janthinobacterium sp. (strain Marseille) (Minibacterium massiliensis).